The primary structure comprises 530 residues: UDP-glucuronosyltransferase 1A9 (530 aa).

The first 25 residues, 1 to 25 (MACTGWTSPLPLCVCLLLTCGFAEA), serve as a signal peptide directing secretion. Asn-71 carries N-linked (GlcNAc...) asparagine glycosylation. Lys-99 is subject to N6-succinyllysine. N-linked (GlcNAc...) asparagine glycans are attached at residues Asn-292 and Asn-344. A helical transmembrane segment spans residues 488-504 (VIGFLLAVVLTVAFITF).

It belongs to the UDP-glycosyltransferase family. In terms of assembly, homodimer. Homooligomer. Interacts with UGT1A1, UGT1A3, UGT1A4, UGT1A6, UGT1A7, UGT1A8 and UGT1A10 to form heterodimers. Isoform 1 interacts with isoform 2/i2 suggesting that oligomerization is involved in negative regulation of transferase activity by isoform 2. Isoform 1 also interacts with respective i2 isoforms of UGT1A1, UGT1A3, UGT1A4, UGT1A6, UGT1A7, UGT1A8 and UGT1A10. In terms of tissue distribution, expressed in liver, kidney, colon, esophagus and small intestine.

The protein localises to the endoplasmic reticulum membrane. The catalysed reaction is glucuronate acceptor + UDP-alpha-D-glucuronate = acceptor beta-D-glucuronoside + UDP + H(+). It catalyses the reaction 2-hydroxy-17beta-estradiol + UDP-alpha-D-glucuronate = 2-hydroxy-17beta-estradiol 3-O-(beta-D-glucuronate) + UDP + H(+). It carries out the reaction 4-hydroxy-17beta-estradiol + UDP-alpha-D-glucuronate = 17beta-estradiol 4-O-(beta-D-glucuronate) + UDP + H(+). The enzyme catalyses 2-hydroxyestrone + UDP-alpha-D-glucuronate = 2-hydroxyestrone 3-O-(beta-D-glucuronate) + UDP + H(+). The catalysed reaction is 4-hydroxyestrone + UDP-alpha-D-glucuronate = estrone 4-O-(beta-D-glucuronate) + UDP + H(+). It catalyses the reaction prunetin + UDP-alpha-D-glucuronate = prunetin-5-O-beta-D-glucuronide + UDP. It carries out the reaction 8-iso-prostaglandin F2alpha + UDP-alpha-D-glucuronate = 8-iso-prostaglandin F2alpha-glucuronide + UDP + H(+). The enzyme catalyses 5-epi-5-F2t-IsoP + UDP-alpha-D-glucuronate = 5-epi-5-F2t-IsoP-glucuronide + UDP + H(+). The catalysed reaction is (5Z,8Z,11Z,14Z)-eicosatetraenoate + UDP-alpha-D-glucuronate = O-[(5Z),(8Z),(11Z),(14Z)-eicosatetraenoyl]-beta-D-glucuronate + UDP. It catalyses the reaction 15-hydroxy-(5Z,8Z,11Z,13E)-eicosatetraenoate + UDP-alpha-D-glucuronate = 15-O-(beta-D-glucuronosyl)-(5Z,8Z,11Z,14Z)-eicosatetraenoate + UDP + H(+). It carries out the reaction prostaglandin B1 + UDP-alpha-D-glucuronate = 15-O-(beta-D-glucuronosyl)-prostaglandin B1 + UDP + H(+). The enzyme catalyses (E)-ferulate + UDP-alpha-D-glucuronate = (E)-4-O-(beta-D-glucuronosyl)-ferulate + UDP + H(+). The catalysed reaction is (E)-ferulate + UDP-alpha-D-glucuronate = (E)-ferulic acid beta-D-glucuronate ester + UDP. It catalyses the reaction candesartan + UDP-alpha-D-glucuronate = candesartan O-beta-D-glucuronoside + UDP. It carries out the reaction SN-38 + UDP-alpha-D-glucuronate = SN-38 O-beta-D-glucuronide + UDP + H(+). The enzyme catalyses mycophenolate + UDP-alpha-D-glucuronate = mycophenolate 7-O-beta-D-glucuronide + UDP + H(+). Its function is as follows. UDP-glucuronosyltransferase (UGT) that catalyzes phase II biotransformation reactions in which lipophilic substrates are conjugated with glucuronic acid to increase the metabolite's water solubility, thereby facilitating excretion into either the urine or bile. Essential for the elimination and detoxification of drugs, xenobiotics and endogenous compounds. Catalyzes the glucuronidation of endogenous estrogen hormones such as estradiol and estrone. Involved in the glucuronidation of arachidonic acid (AA) and AA-derived eicosanoids including 15-HETE, PGB1 and F2-isoprostanes (8-iso-PGF2alpha and 5-epi-5-F2t-IsoP). Glucuronates the phytochemical ferulic acid efficently at both the phenolic or the carboxylic acid group. Also catalyzes the glucuronidation of the isoflavones genistein, daidzein, glycitein, formononetin, biochanin A and prunetin, which are phytoestrogens with anticancer and cardiovascular properties. Involved in the glucuronidation of the AGTR1 angiotensin receptor antagonist caderastan, a drug which can inhibit the effect of angiotensin II. Involved in the biotransformation of 7-ethyl-10-hydroxycamptothecin (SN-38), the pharmacologically active metabolite of the anticancer drug irinotecan. Also metabolizes mycophenolate, an immunosuppressive agent. In terms of biological role, lacks UGT glucuronidation activity but acts as a negative regulator of isoform 1. This Homo sapiens (Human) protein is UDP-glucuronosyltransferase 1A9.